Reading from the N-terminus, the 217-residue chain is Glycosylphosphatidylinositol anchor biosynthesis protein 11 (217 aa).

A glycan (N-linked (GlcNAc...) asparagine) is linked at asparagine 20. 6 helical membrane passes run 41–61 (VYVRKSWTLIPFHLLALLYWF), 66–86 (DFNLLALLYIMIPTQVIYLIF), 107–127 (FITLGACLLLSIPCLAIIVLF), 139–159 (WLLALHCCFLTYPAVYDVFNC), 169–189 (YFISVVIGCWISCFVIPLDWD), and 197–217 (VPLIVGAYLGSFIGFSIGGYI).

It belongs to the PIGF family.

The protein localises to the endoplasmic reticulum membrane. It participates in glycolipid biosynthesis; glycosylphosphatidylinositol-anchor biosynthesis. Functionally, acts in the GPI biosynthetic pathway between GlcNAc-PI synthesis and GPI transfer to protein. The chain is Glycosylphosphatidylinositol anchor biosynthesis protein 11 (GPI11) from Kluyveromyces lactis (strain ATCC 8585 / CBS 2359 / DSM 70799 / NBRC 1267 / NRRL Y-1140 / WM37) (Yeast).